A 296-amino-acid chain; its full sequence is Phosphatidylglycerol--prolipoprotein diacylglyceryl transferase (296 aa).

The next 7 helical transmembrane spans lie at 17–37 (LAVRWYGLMYLVGFIAAIVVG), 59–79 (MMFYGVLGTVLGGRLGYVLFY), 97–117 (GGMSFHGGFLGVTLAMVLFAW), 129–149 (FVAPMVPAGLAAGRLGNFING), 203–223 (PSQLYEIALEGIALFFVLFFF), 230–250 (LGAVSALFLIGYGLARFTVEF), and 265–285 (LSMGQWLSLPMILAGIALLVW). An a 1,2-diacyl-sn-glycero-3-phospho-(1'-sn-glycerol)-binding site is contributed by Arg-142.

The protein belongs to the Lgt family.

Its subcellular location is the cell inner membrane. It catalyses the reaction L-cysteinyl-[prolipoprotein] + a 1,2-diacyl-sn-glycero-3-phospho-(1'-sn-glycerol) = an S-1,2-diacyl-sn-glyceryl-L-cysteinyl-[prolipoprotein] + sn-glycerol 1-phosphate + H(+). The protein operates within protein modification; lipoprotein biosynthesis (diacylglyceryl transfer). Catalyzes the transfer of the diacylglyceryl group from phosphatidylglycerol to the sulfhydryl group of the N-terminal cysteine of a prolipoprotein, the first step in the formation of mature lipoproteins. The protein is Phosphatidylglycerol--prolipoprotein diacylglyceryl transferase of Burkholderia ambifaria (strain MC40-6).